Reading from the N-terminus, the 175-residue chain is Adenine phosphoribosyltransferase (175 aa).

Belongs to the purine/pyrimidine phosphoribosyltransferase family. In terms of assembly, homodimer.

The protein resides in the cytoplasm. The catalysed reaction is AMP + diphosphate = 5-phospho-alpha-D-ribose 1-diphosphate + adenine. Its pathway is purine metabolism; AMP biosynthesis via salvage pathway; AMP from adenine: step 1/1. In terms of biological role, catalyzes a salvage reaction resulting in the formation of AMP, that is energically less costly than de novo synthesis. This Francisella philomiragia subsp. philomiragia (strain ATCC 25017 / CCUG 19701 / FSC 153 / O#319-036) protein is Adenine phosphoribosyltransferase.